Reading from the N-terminus, the 278-residue chain is ATP synthase subunit delta (278 aa).

Belongs to the ATPase delta chain family. In terms of assembly, F-type ATPases have 2 components, F(1) - the catalytic core - and F(0) - the membrane proton channel. F(1) has five subunits: alpha(3), beta(3), gamma(1), delta(1), epsilon(1). F(0) has three main subunits: a(1), b(2) and c(10-14). The alpha and beta chains form an alternating ring which encloses part of the gamma chain. F(1) is attached to F(0) by a central stalk formed by the gamma and epsilon chains, while a peripheral stalk is formed by the delta and b chains.

It localises to the cell membrane. Functionally, f(1)F(0) ATP synthase produces ATP from ADP in the presence of a proton or sodium gradient. F-type ATPases consist of two structural domains, F(1) containing the extramembraneous catalytic core and F(0) containing the membrane proton channel, linked together by a central stalk and a peripheral stalk. During catalysis, ATP synthesis in the catalytic domain of F(1) is coupled via a rotary mechanism of the central stalk subunits to proton translocation. In terms of biological role, this protein is part of the stalk that links CF(0) to CF(1). It either transmits conformational changes from CF(0) to CF(1) or is implicated in proton conduction. In Bifidobacterium longum (strain DJO10A), this protein is ATP synthase subunit delta.